The chain runs to 362 residues: Neisseria adhesin A (362 aa).

A signal peptide spans 1–23 (MKHFPSKVLTTAILATFCSGALA). A head domain region spans residues 24 to 169 (ATSDDDVKKA…NIVKIDEKLE (146 aa)). 2 coiled-coil regions span residues 90-146 (VTNL…LNKL) and 183-288 (NDIA…KETR). A coiled stalk domain region spans residues 170–307 (AVADTVDKHA…SGLFQPYNVG (138 aa)). Beta stranded transmembrane passes span 307–317 (GRFNVTAAVGG), 321–332 (ESAVAIGTGFRF), 339–345 (KAGVAVG), and 351–362 (SAAYHVGVNYEW). The tract at residues 308–362 (RFNVTAAVGGYKSESAVAIGTGFRFTENFAAKAGVAVGTSSGSSAAYHVGVNYEW) is translocator domain.

It belongs to the autotransporter-2 (AT-2) (TC 1.B.40) family. As to quaternary structure, forms high molecular weight oligomers in whole cell extracts that are not disrupted by boiling in SDS buffer. Homotrimer. A fragment containing the N-terminal half of the mature protein (residues 24-210, head domain plus part of the stalk) binds human integrin beta-1 (ITGB1). It was not seen to bind immobilized purified CEACAMs 1, 3, 5, 6 or 8 nor commercially prepared type I collagen, fibronectin or matrigel.

It is found in the cell surface. Its subcellular location is the cell outer membrane. In terms of biological role, adheres to and induces bacterial uptake by human epithelial cells. Upon expression in engineered Y.enterocolitica confers an 11- to 15-fold increase in bacterial adherence and uptake by human epithelial cell lines; part of the uptake is mediated by integrin beta-1 (ITGB1) suggesting it may be a human receptor for NadA. A bacterial cell surface protein; antisera against this protein induce complement-mediated killing of this and other strains. This is Neisseria adhesin A from Neisseria meningitidis serogroup B (strain ATCC BAA-335 / MC58).